A 205-amino-acid polypeptide reads, in one-letter code: Sarcosine oxidase subunit gamma (205 aa).

This sequence belongs to the SoxG family. Heterotetramer composed of subunits alpha (SoxA), beta (SoxB), gamma (SoxG) and delta (SoxD).

It localises to the cytoplasm. The catalysed reaction is sarcosine + (6S)-5,6,7,8-tetrahydrofolate + O2 = (6R)-5,10-methylene-5,6,7,8-tetrahydrofolate + glycine + H2O2. It carries out the reaction sarcosine + O2 + H2O = formaldehyde + glycine + H2O2. With respect to regulation, inhibited by Zn(2+), Cu(2+), Cd(2+), Hg(2+), Ag(+), p-chloromercuribenzoate (p-CMB), iodoacetamide, N-ethylmaleimide, CN(-), o-phenanthroline and sodium lauryl sulfate. In terms of biological role, in the presence of tetrahydrofolate, catalyzes the oxidative demethylation of sarcosine to yield glycine, 5,10-methylenetetrahydrofolate and hydrogen peroxide. In the absence of tetrahydrofolate, catalyzes the oxidative demethylation of sarcosine to yield glycine, formaldehyde and hydrogen peroxide. Can also use N-methyl-L-alanine and N-ethyl-L-glycine. Is very specific for oxygen as an acceptor. The polypeptide is Sarcosine oxidase subunit gamma (Corynebacterium sp. (strain U-96)).